Consider the following 209-residue polypeptide: Ribosomal RNA small subunit methyltransferase G (209 aa).

Residues Gly71, Phe76, 122–123 (AE), and Arg135 each bind S-adenosyl-L-methionine.

This sequence belongs to the methyltransferase superfamily. RNA methyltransferase RsmG family.

The protein localises to the cytoplasm. Specifically methylates the N7 position of a guanine in 16S rRNA. This chain is Ribosomal RNA small subunit methyltransferase G, found in Flavobacterium psychrophilum (strain ATCC 49511 / DSM 21280 / CIP 103535 / JIP02/86).